Here is a 332-residue protein sequence, read N- to C-terminus: tRNA-dihydrouridine synthase B (332 aa).

FMN is bound by residues 16–18 and Gln70; that span reads PMA. Cys100 serves as the catalytic Proton donor. Residues Lys139, 200 to 202, and 224 to 225 each bind FMN; these read NGD and GR.

This sequence belongs to the Dus family. DusB subfamily. The cofactor is FMN.

It carries out the reaction a 5,6-dihydrouridine in tRNA + NAD(+) = a uridine in tRNA + NADH + H(+). The enzyme catalyses a 5,6-dihydrouridine in tRNA + NADP(+) = a uridine in tRNA + NADPH + H(+). In terms of biological role, catalyzes the synthesis of 5,6-dihydrouridine (D), a modified base found in the D-loop of most tRNAs, via the reduction of the C5-C6 double bond in target uridines. This Pasteurella multocida (strain Pm70) protein is tRNA-dihydrouridine synthase B.